Here is a 457-residue protein sequence, read N- to C-terminus: MQKYISEARLLLALAIPVILAQIAQTAMGFVDTVMAGGYSATDMAAVAIGTSIWLPAILFGHGLLLALTPVIAQLNGSGRRERIAHQVRQGFWLAGFVSVLIMLVLWNAGYIIRSMENIDPALADKAVGYLRALLWGAPGYLFFQVARNQCEGLAKTKPGMVMGFIGLLVNIPVNYIFIYGHFGMPELGGVGCGVATAAVYWVMFLAMVSYIKRARSMRDIRNEKGTAKPDPAVMKRLIQLGLPIALALFFEVTLFAVVALLVSPLGIVDVAGHQIALNFSSLMFVLPMSLAAAVTIRVGYRLGQGSTLDAQTAARTGLMVGVCMATLTAIFTVSLREQIALLYNDNPEVVTLAAHLMLLAAVYQISDSIQVIGSGILRGYKDTRSIFYITFTAYWVLGLPSGYILALTDLVVKPMGPAGFWIGFIIGLTSAAIMMMLRMRFLQRLPSVIILQRASR.

A run of 12 helical transmembrane segments spans residues Leu11–Val31, Ile53–Ala73, Trp93–Ile113, Ala127–Ala147, Gly160–Tyr180, Gly189–Val209, Leu243–Val263, Ile276–Thr296, Ala314–Val334, Val350–Ile370, Ile387–Ala407, and Pro418–Leu438.

The protein belongs to the multi antimicrobial extrusion (MATE) (TC 2.A.66.1) family. MdtK subfamily.

It localises to the cell inner membrane. Functionally, multidrug efflux pump that functions probably as a Na(+)/drug antiporter. The sequence is that of Multidrug resistance protein MdtK from Escherichia coli (strain SE11).